The sequence spans 570 residues: MRLVAKLLYLAVLAICGLGIHGALTHPRVTPPVYPSVSFNLTGADTYEPFLRALQEKVILGNHTAFDLPVLNPESQVSDSNRFVLVPLTNPSGDTVTLAIDVVNLYVVAFSSNGKSYFFSGSTAVQRDNLFVDTTQEELNFTGNYTSLERQVGFGRVYIPLGPKSLDQAISSLRTYTLTAGDTKPLARGLLVVIQMVSEAARFRYIELRIRTSITDASEFTPDLLMLSMENNWSSMSSEIQQAQPGGIFAGVVQLRDERNNSIEVTNFRRLFELTYIAVLLYGCAPVTSSSYSNNAIDAQIIKMPVFRGGEYEKVCSVVEVTRRISGWDGLCVDVRYGHYIDGNPVQLRPCGNECNQLWTFRTDGTIRWLGKCLTASSSVMIYDCNTVPPEATKWVVSIDGTITNPHSGLVLTAPQAAEGTALSLENNIHAARQGWTVGDVEPLVTFIVGYKQMCLRENGENNFVWLEDCVLNRVQQEWALYGDGTIRVNSNRSLCVTSEDHEPSDLIVILKCEGSGNQRWVFNTNGTISNPNAKLLMDVAQRDVSLRKIILYRPTGNPNQQWITTTHPA.

An N-terminal signal peptide occupies residues 1 to 28; it reads MRLVAKLLYLAVLAICGLGIHGALTHPR. Residues N40, N62, and N144 are each glycosylated (N-linked (GlcNAc...) asparagine). Residue E199 is part of the active site. N260 carries an N-linked (GlcNAc...) asparagine glycan. 3 cysteine pairs are disulfide-bonded: C284-C316, C332-C351, and C373-C385. Ricin B-type lectin domains are found at residues 319-439 and 441-566; these read VEVT…WTVG and VEPL…WITT. The 1-alpha repeat unit spans residues 329-369; sequence DGLCVDVRYGHYIDGNPVQLRPCGNECNQLWTFRTDGTIRW. The stretch at 370–405 is one 1-beta repeat; that stretch reads LGKCLTASSSVMIYDCNTVPPEATKWVVSIDGTITN. A 1-gamma repeat occupies 408–440; sequence SGLVLTAPQAAEGTALSLENNIHAARQGWTVGD. The stretch at 452–489 is one 2-alpha repeat; it reads KQMCLRENGENNFVWLEDCVLNRVQQEWALYGDGTIRV. An intrachain disulfide couples C455 to C470. N492 is a glycosylation site (N-linked (GlcNAc...) asparagine). Residues 493–531 form a 2-beta repeat; sequence RSLCVTSEDHEPSDLIVILKCEGSGNQRWVFNTNGTISN. Residues C496 and C513 are joined by a disulfide bond. An N-linked (GlcNAc...) asparagine glycan is attached at N526. The 2-gamma repeat unit spans residues 534–567; the sequence is AKLLMDVAQRDVSLRKIILYRPTGNPNQQWITTT.

The protein belongs to the ribosome-inactivating protein family. Type 2 RIP subfamily. Tetramer of four pairs of disulfide bound A-B chains. The precursor is processed in two chains, A and B, that are linked by a disulfide bond. A small truncated form corresponding roughly to the second ricin B-type lectin domain of the B chain, TrSNAI, can also be produced. Post-translationally, glycosylated. N-glycans of subunit A are (Man)2-3(Xyl)(GlcNAc)2(Fuc) at Asn-40, (GlcNAc)0-2(Man)3(Xyl)(GlcNAc)2(Fuc) or (Man)1-2(GlcNAc)2 at Asn-62, (Man)3(Xyl)(GlcNAc)2(Fuc)0-1 at Asn-144 and (GlcNAc)0-1(Man)3(Xyl)(GlcNAc)2(Fuc) at Asn-260. N-glycans of subunit B are (Man)3(Xyl)(GlcNAc)2(Fuc) at Asn-492 and (Man)6-9(GlcNAc)2 at Asn-526. As to expression, expressed in bark.

It catalyses the reaction Endohydrolysis of the N-glycosidic bond at one specific adenosine on the 28S rRNA.. Its function is as follows. Neu5Ac(alpha2-6)Gal/GalNAc specific agglutinin. Behaves as a type-2 ribosome-inactivating protein. Strongly inhibits mammalian but not plant ribosomes. The A chain is responsible for inhibiting protein synthesis through the catalytic inactivation of 60S ribosomal subunits by removing adenine from position 4,324 of 28S rRNA. The B chain binds to cell receptors and probably facilitates the entry into the cell of the A chain; B chains are also responsible for cell agglutination (lectin activity). Involved in plant defense against insects. Binds Neu5Ac(alpha2-6)Gal/GalNAc but has no clear agglutination activity. The chain is Ribosome-inactivating protein SNAI from Sambucus nigra (European elder).